The chain runs to 121 residues: uncharacterized protein (121 aa).

Transmembrane regions (helical) follow at residues 26–46 and 72–92; these read FIAL…ILVL and AFLT…WLGL.

It is found in the membrane. This is an uncharacterized protein from Saccharomyces cerevisiae (strain ATCC 204508 / S288c) (Baker's yeast).